The chain runs to 123 residues: Small ribosomal subunit protein uS12c (123 aa).

It belongs to the universal ribosomal protein uS12 family. As to quaternary structure, part of the 30S ribosomal subunit.

It localises to the plastid. It is found in the chloroplast. Functionally, with S4 and S5 plays an important role in translational accuracy. Located at the interface of the 30S and 50S subunits. This Marchantia polymorpha (Common liverwort) protein is Small ribosomal subunit protein uS12c (rps12).